We begin with the raw amino-acid sequence, 245 residues long: Small ribosomal subunit protein uS3 (245 aa).

Residues 38–106 (IRKYLNTRLA…EVQINIFEIK (69 aa)) form the KH type-2 domain. The disordered stretch occupies residues 225–245 (YEGSGDKSVKRRKRNGIKKNE). The span at 233–245 (VKRRKRNGIKKNE) shows a compositional bias: basic residues.

It belongs to the universal ribosomal protein uS3 family. Part of the 30S ribosomal subunit. Forms a tight complex with proteins S10 and S14.

Binds the lower part of the 30S subunit head. Binds mRNA in the 70S ribosome, positioning it for translation. The sequence is that of Small ribosomal subunit protein uS3 from Azobacteroides pseudotrichonymphae genomovar. CFP2.